Here is a 374-residue protein sequence, read N- to C-terminus: Chaperone protein DnaJ (374 aa).

One can recognise a J domain in the interval 5–70 (DYYEVLGVNL…RKRASYDQFG (66 aa)). The CR-type zinc-finger motif lies at 133–210 (GLSRTIKVPT…CHGQGRQQQT (78 aa)). 8 residues coordinate Zn(2+): C146, C149, C162, C165, C184, C187, C198, and C201. 4 CXXCXGXG motif repeats span residues 146–153 (CKTCNGSG), 162–169 (CPRCNGSG), 184–191 (CSVCRGRG), and 198–205 (CTDCHGQG).

The protein belongs to the DnaJ family. As to quaternary structure, homodimer. Zn(2+) serves as cofactor.

It localises to the cytoplasm. Its function is as follows. Participates actively in the response to hyperosmotic and heat shock by preventing the aggregation of stress-denatured proteins and by disaggregating proteins, also in an autonomous, DnaK-independent fashion. Unfolded proteins bind initially to DnaJ; upon interaction with the DnaJ-bound protein, DnaK hydrolyzes its bound ATP, resulting in the formation of a stable complex. GrpE releases ADP from DnaK; ATP binding to DnaK triggers the release of the substrate protein, thus completing the reaction cycle. Several rounds of ATP-dependent interactions between DnaJ, DnaK and GrpE are required for fully efficient folding. Also involved, together with DnaK and GrpE, in the DNA replication of plasmids through activation of initiation proteins. The chain is Chaperone protein DnaJ from Coxiella burnetii (strain RSA 331 / Henzerling II).